We begin with the raw amino-acid sequence, 264 residues long: ATP synthase subunit a (264 aa).

6 helical membrane passes run 29 to 49 (TWHI…LWLF), 89 to 109 (VIAP…FMDM), 134 to 154 (DLNI…YYSI), 177 to 197 (IPVN…SLAL), 208 to 228 (LIFI…TLGV), and 235 to 255 (LIFH…LTIV).

The protein belongs to the ATPase A chain family. F-type ATPases have 2 components, CF(1) - the catalytic core - and CF(0) - the membrane proton channel. CF(1) has five subunits: alpha(3), beta(3), gamma(1), delta(1), epsilon(1). CF(0) has three main subunits: a(1), b(2) and c(9-12). The alpha and beta chains form an alternating ring which encloses part of the gamma chain. CF(1) is attached to CF(0) by a central stalk formed by the gamma and epsilon chains, while a peripheral stalk is formed by the delta and b chains.

It localises to the cell inner membrane. Key component of the proton channel; it plays a direct role in the translocation of protons across the membrane. This Shewanella woodyi (strain ATCC 51908 / MS32) protein is ATP synthase subunit a.